Reading from the N-terminus, the 450-residue chain is 3-phosphoshikimate 1-carboxyvinyltransferase (450 aa).

Residues lysine 28, serine 29, and arginine 33 each contribute to the 3-phosphoshikimate site. Lysine 28 is a phosphoenolpyruvate binding site. Residues glycine 100 and arginine 128 each coordinate phosphoenolpyruvate. Positions 173, 175, 326, and 353 each coordinate 3-phosphoshikimate. Position 175 (glutamine 175) interacts with phosphoenolpyruvate. The active-site Proton acceptor is the aspartate 326. Residues arginine 357 and arginine 402 each contribute to the phosphoenolpyruvate site.

This sequence belongs to the EPSP synthase family. As to quaternary structure, monomer.

It localises to the cytoplasm. The catalysed reaction is 3-phosphoshikimate + phosphoenolpyruvate = 5-O-(1-carboxyvinyl)-3-phosphoshikimate + phosphate. It functions in the pathway metabolic intermediate biosynthesis; chorismate biosynthesis; chorismate from D-erythrose 4-phosphate and phosphoenolpyruvate: step 6/7. Functionally, catalyzes the transfer of the enolpyruvyl moiety of phosphoenolpyruvate (PEP) to the 5-hydroxyl of shikimate-3-phosphate (S3P) to produce enolpyruvyl shikimate-3-phosphate and inorganic phosphate. In Brucella melitensis biotype 2 (strain ATCC 23457), this protein is 3-phosphoshikimate 1-carboxyvinyltransferase.